Reading from the N-terminus, the 213-residue chain is UPF0329 protein ECU04_0110 (213 aa).

This sequence belongs to the UPF0329 family.

The polypeptide is UPF0329 protein ECU04_0110 (Encephalitozoon cuniculi (strain GB-M1) (Microsporidian parasite)).